The primary structure comprises 279 residues: MNKDHTLYCSVYIRNAFFSEIGIGISANSCLLLFHTFMFIRGHRPRLTDLPIGFVALIHLVMLLLAAYITEDFFMSSGGWDDITCKLVIFLHRFFRSLSVCATCLLSVFQAIILCPQSSHLAKLKQNSPHQLSYFFIFLSIFYTSISSQILIAAIPTQNITFVNLIYITNSCSFLPLSSSMQHTFSTLLTFRNVFVIGLMGLSTCYMATLLCRHKTRSQRLQNSKLSPKATPEQRALRTILMLMSFFLLMSTFDSIISYSRTIITGKSTALLCPDSCRS.

At 1–19 (MNKDHTLYCSVYIRNAFFS) the chain is on the extracellular side. The helical transmembrane segment at 20-40 (EIGIGISANSCLLLFHTFMFI) threads the bilayer. The Cytoplasmic portion of the chain corresponds to 41–49 (RGHRPRLTD). The chain crosses the membrane as a helical span at residues 50-70 (LPIGFVALIHLVMLLLAAYIT). Residues 71 to 93 (EDFFMSSGGWDDITCKLVIFLHR) are Extracellular-facing. Residues Cys-85 and Cys-172 are joined by a disulfide bond. A helical membrane pass occupies residues 94-114 (FFRSLSVCATCLLSVFQAIIL). Over 115-134 (CPQSSHLAKLKQNSPHQLSY) the chain is Cytoplasmic. A helical membrane pass occupies residues 135-155 (FFIFLSIFYTSISSQILIAAI). Topologically, residues 156-159 (PTQN) are extracellular. An N-linked (GlcNAc...) asparagine glycan is attached at Asn-159. The chain crosses the membrane as a helical span at residues 160-180 (ITFVNLIYITNSCSFLPLSSS). The Cytoplasmic portion of the chain corresponds to 181 to 187 (MQHTFST). Residues 188–208 (LLTFRNVFVIGLMGLSTCYMA) traverse the membrane as a helical segment. Residues 209-238 (TLLCRHKTRSQRLQNSKLSPKATPEQRALR) are Extracellular-facing. A helical transmembrane segment spans residues 239 to 259 (TILMLMSFFLLMSTFDSIISY). The Cytoplasmic portion of the chain corresponds to 260 to 279 (SRTIITGKSTALLCPDSCRS).

Belongs to the G-protein coupled receptor 1 family. Expressed in a subset of sensory neurons located in the apical layer of the vomeronasal organ.

It localises to the cell membrane. Functionally, putative pheromone receptor implicated in the regulation of social and reproductive behavior. This is Vomeronasal type-1 receptor A8 from Mus musculus (Mouse).